The sequence spans 891 residues: Longitudinals lacking protein, isoform G (891 aa).

Residues 32 to 97 (VDCTLAAEGK…MYRGEVNISQ (66 aa)) enclose the BTB domain. Disordered stretches follow at residues 115–200 (LSDN…SSVL) and 228–340 (SSGP…ASAS). S140 carries the post-translational modification Phosphoserine. At T161 the chain carries Phosphothreonine. S162 and S168 each carry phosphoserine. Low complexity-rich tracts occupy residues 162–175 (SGDV…SSSP), 228–251 (SSGP…LTST), 263–293 (TSST…QTTS), and 329–340 (NSATGPNPASAS). Phosphoserine is present on residues S372, S375, and S378. A disordered region spans residues 446-467 (QDAQQRDPQDLSRKENTAPDVA). A compositionally biased stretch (basic and acidic residues) spans 449-462 (QQRDPQDLSRKENT). Phosphoserine occurs at positions 696 and 705. At T706 the chain carries Phosphothreonine. S749 and S750 each carry phosphoserine. The segment at 791 to 813 (YECRHCGKKYRWKSTLRRHENVE) adopts a C2H2-type 1; degenerate zinc-finger fold. Residues 821–843 (HQCPYCPYKSKQRGNLGVHVRKH) form a C2H2-type 2 zinc finger. Residues 840 to 891 (VRKHHTDLPQLPSKRRSKYSMNRENGMSGSMSDDSQGKLIIDFNGKGELETK) form a disordered region. S874 is modified (phosphoserine).

In terms of tissue distribution, expressed in both mesoderm and ectoderm with expression highest in the mesectoderm by stage 11. Becomes enriched in a cluster of brain cells, in abdominal histoblasts, and in the embryonic imaginal disks during later stages.

The protein resides in the nucleus. In terms of biological role, putative transcription factor required for axon growth and guidance in the central and peripheral nervous systems. Repels CNS axons away from the midline by promoting the expression of the midline repellent sli and its receptor robo. This is Longitudinals lacking protein, isoform G from Drosophila melanogaster (Fruit fly).